Reading from the N-terminus, the 147-residue chain is D-aminoacyl-tRNA deacylase (147 aa).

A Gly-cisPro motif, important for rejection of L-amino acids motif is present at residues 137-138 (GP).

Belongs to the DTD family. In terms of assembly, homodimer.

It localises to the cytoplasm. It carries out the reaction glycyl-tRNA(Ala) + H2O = tRNA(Ala) + glycine + H(+). The enzyme catalyses a D-aminoacyl-tRNA + H2O = a tRNA + a D-alpha-amino acid + H(+). An aminoacyl-tRNA editing enzyme that deacylates mischarged D-aminoacyl-tRNAs. Also deacylates mischarged glycyl-tRNA(Ala), protecting cells against glycine mischarging by AlaRS. Acts via tRNA-based rather than protein-based catalysis; rejects L-amino acids rather than detecting D-amino acids in the active site. By recycling D-aminoacyl-tRNA to D-amino acids and free tRNA molecules, this enzyme counteracts the toxicity associated with the formation of D-aminoacyl-tRNA entities in vivo and helps enforce protein L-homochirality. The polypeptide is D-aminoacyl-tRNA deacylase (Acinetobacter baumannii (strain ACICU)).